Consider the following 94-residue polypeptide: Small ribosomal subunit protein bS6 (94 aa).

It belongs to the bacterial ribosomal protein bS6 family.

In terms of biological role, binds together with bS18 to 16S ribosomal RNA. The protein is Small ribosomal subunit protein bS6 of Phytoplasma mali (strain AT).